A 311-amino-acid polypeptide reads, in one-letter code: Glutamyl-Q tRNA(Asp) synthetase (311 aa).

Residues 14 to 18 (RYAPS) and Glu-50 contribute to the L-glutamate site. A 'HIGH' region motif is present at residues 17–27 (PSPSGDLHLGN). Zn(2+) contacts are provided by Cys-104, Cys-106, Tyr-125, and Cys-129. L-glutamate contacts are provided by Tyr-186 and Arg-204. The 'KMSKS' region signature appears at 242 to 246 (RLAKR). Lys-245 is an ATP binding site.

This sequence belongs to the class-I aminoacyl-tRNA synthetase family. GluQ subfamily. It depends on Zn(2+) as a cofactor.

Catalyzes the tRNA-independent activation of glutamate in presence of ATP and the subsequent transfer of glutamate onto a tRNA(Asp). Glutamate is transferred on the 2-amino-5-(4,5-dihydroxy-2-cyclopenten-1-yl) moiety of the queuosine in the wobble position of the QUC anticodon. This chain is Glutamyl-Q tRNA(Asp) synthetase, found in Nocardia farcinica (strain IFM 10152).